A 184-amino-acid polypeptide reads, in one-letter code: MKIKTLAIVVLSALSLSSTAALADTTPTTVNGGTVHFKGEVVNAACAVDAGSVDQTVQLGQVRTATLKQAGATSSAVGFNIQLNDCDTTVATKAAVAFLGTAIDSTHPKVLALQSSAAGSATNVGVQILDRTGNELTLDGATFSAETTLNNGTNTIPFQARYFATGAATPGAANADATFKVQYQ.

The N-terminal stretch at 1–23 is a signal peptide; sequence MKIKTLAIVVLSALSLSSTAALA. The cysteines at positions 46 and 86 are disulfide-linked.

This sequence belongs to the fimbrial protein family.

The protein resides in the fimbrium. In terms of biological role, fimbriae (also called pili), polar filaments radiating from the surface of the bacterium to a length of 0.5-1.5 micrometers and numbering 100-300 per cell, enable bacteria to colonize the epithelium of specific host organs. In Escherichia coli, this protein is Type-1 fimbrial protein, A chain.